The chain runs to 229 residues: GTP cyclohydrolase 1 (229 aa).

The tract at residues Met-1–Lys-21 is disordered. The Zn(2+) site is built by Cys-116, His-119, and Cys-187.

It belongs to the GTP cyclohydrolase I family. In terms of assembly, toroid-shaped homodecamer, composed of two pentamers of five dimers.

The enzyme catalyses GTP + H2O = 7,8-dihydroneopterin 3'-triphosphate + formate + H(+). The protein operates within cofactor biosynthesis; 7,8-dihydroneopterin triphosphate biosynthesis; 7,8-dihydroneopterin triphosphate from GTP: step 1/1. In Synechococcus sp. (strain JA-2-3B'a(2-13)) (Cyanobacteria bacterium Yellowstone B-Prime), this protein is GTP cyclohydrolase 1.